Reading from the N-terminus, the 166-residue chain is Small heat shock protein OV25-2 (166 aa).

Positions 38-149 (LNECNIGNSL…ASRNIPIRAS (112 aa)) constitute a sHSP domain. A disordered region spans residues 140–166 (ASRNIPIRASPKEPEANQKSAINDAKQ).

The protein belongs to the small heat shock protein (HSP20) family.

This chain is Small heat shock protein OV25-2 (OV25-2), found in Onchocerca volvulus.